Here is an 856-residue protein sequence, read N- to C-terminus: Envelope glycoprotein gp160 (856 aa).

Residues Met1 to Glu31 form the signal peptide. Residues Gln32–Ile684 lie on the Extracellular side of the membrane. Cys53 and Cys73 are disulfide-bonded. Asn87, Asn134, Asn140, Asn151, Asn155, Asn183, Asn197, Asn234, Asn241, Asn262, Asn276, Asn289, and Asn295 each carry an N-linked (GlcNAc...) asparagine; by host glycan. Disulfide bonds link Cys118–Cys205, Cys125–Cys196, Cys130–Cys152, Cys218–Cys247, and Cys228–Cys239. Positions Cys130 to Asn151 are V1. The segment at Cys152 to Cys196 is V2. Residues Cys296–His329 are V3. Residues Cys296 and Cys330 are joined by a disulfide bond. 4 N-linked (GlcNAc...) asparagine; by host glycosylation sites follow: Asn331, Asn338, Asn354, and Asn360. A CD4-binding loop region spans residues Ser362–His372. 2 disulfide bridges follow: Cys376–Cys444 and Cys383–Cys417. The interval Cys383–Cys417 is V4. 5 N-linked (GlcNAc...) asparagine; by host glycosylation sites follow: Asn390, Asn394, Asn404, Asn447, and Asn459. V5 stretches follow at residues Ser460 to Gly470 and Ser462 to Gly470. A fusion peptide region spans residues Ala511–Ala532. Positions Lys574–Leu592 are immunosuppression. Cys598 and Cys604 are joined by a disulfide. 4 N-linked (GlcNAc...) asparagine; by host glycosylation sites follow: Asn611, Asn616, Asn625, and Asn637. Positions Arg633 to Ala667 form a coiled coil. The MPER; binding to GalCer stretch occupies residues Glu662 to Lys683. A helical transmembrane segment spans residues Phe685–Val705. Residues Asn706 to Leu856 lie on the Cytoplasmic side of the membrane. Residues Tyr712–Leu715 carry the YXXL motif; contains endocytosis signal motif. The segment at Ser716 to Arg742 is disordered. Residues Cys764 and Cys837 are each lipidated (S-palmitoyl cysteine; by host). Positions Leu855 to Leu856 match the Di-leucine internalization motif motif.

This sequence belongs to the HIV-1 env protein family. The mature envelope protein (Env) consists of a homotrimer of non-covalently associated gp120-gp41 heterodimers. The resulting complex protrudes from the virus surface as a spike. There seems to be as few as 10 spikes on the average virion. Interacts with host CD4, CCR5 and CXCR4. Gp120 also interacts with the C-type lectins CD209/DC-SIGN and CLEC4M/DC-SIGNR (collectively referred to as DC-SIGN(R)). Gp120 and gp41 interact with GalCer. Gp120 interacts with host ITGA4/ITGB7 complex; on CD4+ T-cells, this interaction results in rapid activation of integrin ITGAL/LFA-1, which facilitates efficient cell-to-cell spreading of HIV-1. Gp120 interacts with cell-associated heparan sulfate; this interaction increases virus infectivity on permissive cells and may be involved in infection of CD4- cells. As to quaternary structure, the mature envelope protein (Env) consists of a homotrimer of non-covalently associated gp120-gp41 heterodimers. The resulting complex protrudes from the virus surface as a spike. There seems to be as few as 10 spikes on the average virion. In terms of processing, highly glycosylated by host. The high number of glycan on the protein is reffered to as 'glycan shield' because it contributes to hide protein sequence from adaptive immune system. Post-translationally, palmitoylation of the transmembrane protein and of Env polyprotein (prior to its proteolytic cleavage) is essential for their association with host cell membrane lipid rafts. Palmitoylation is therefore required for envelope trafficking to classical lipid rafts, but not for viral replication. Specific enzymatic cleavages in vivo yield mature proteins. Envelope glycoproteins are synthesized as an inactive precursor that is heavily N-glycosylated and processed likely by host cell furin in the Golgi to yield the mature SU and TM proteins. The cleavage site between SU and TM requires the minimal sequence [KR]-X-[KR]-R. About 2 of the 9 disulfide bonds of gp41 are reduced by P4HB/PDI, following binding to CD4 receptor.

The protein localises to the virion membrane. It localises to the host cell membrane. The protein resides in the host endosome membrane. Oligomerizes in the host endoplasmic reticulum into predominantly trimers. In a second time, gp160 transits in the host Golgi, where glycosylation is completed. The precursor is then proteolytically cleaved in the trans-Golgi and thereby activated by cellular furin or furin-like proteases to produce gp120 and gp41. Its function is as follows. Attaches the virus to the host lymphoid cell by binding to the primary receptor CD4. This interaction induces a structural rearrangement creating a high affinity binding site for a chemokine coreceptor like CXCR4 and/or CCR5. Acts as a ligand for CD209/DC-SIGN and CLEC4M/DC-SIGNR, which are respectively found on dendritic cells (DCs), and on endothelial cells of liver sinusoids and lymph node sinuses. These interactions allow capture of viral particles at mucosal surfaces by these cells and subsequent transmission to permissive cells. HIV subverts the migration properties of dendritic cells to gain access to CD4+ T-cells in lymph nodes. Virus transmission to permissive T-cells occurs either in trans (without DCs infection, through viral capture and transmission), or in cis (following DCs productive infection, through the usual CD4-gp120 interaction), thereby inducing a robust infection. In trans infection, bound virions remain infectious over days and it is proposed that they are not degraded, but protected in non-lysosomal acidic organelles within the DCs close to the cell membrane thus contributing to the viral infectious potential during DCs' migration from the periphery to the lymphoid tissues. On arrival at lymphoid tissues, intact virions recycle back to DCs' cell surface allowing virus transmission to CD4+ T-cells. Functionally, acts as a class I viral fusion protein. Under the current model, the protein has at least 3 conformational states: pre-fusion native state, pre-hairpin intermediate state, and post-fusion hairpin state. During fusion of viral and target intracellular membranes, the coiled coil regions (heptad repeats) assume a trimer-of-hairpins structure, positioning the fusion peptide in close proximity to the C-terminal region of the ectodomain. The formation of this structure appears to drive apposition and subsequent fusion of viral and target cell membranes. Complete fusion occurs in host cell endosomes and is dynamin-dependent, however some lipid transfer might occur at the plasma membrane. The virus undergoes clathrin-dependent internalization long before endosomal fusion, thus minimizing the surface exposure of conserved viral epitopes during fusion and reducing the efficacy of inhibitors targeting these epitopes. Membranes fusion leads to delivery of the nucleocapsid into the cytoplasm. The chain is Envelope glycoprotein gp160 from Homo sapiens (Human).